Here is a 119-residue protein sequence, read N- to C-terminus: MKALSPVRGCYEAVCCLSERSLAIARGRGKSPSAEEPLSLLDDMNHCYSRLRELVPGVPRGTQLSQVEILQRVIDYILDLQVVLAEPAPGPPDGPHLPIQTAELTPELVISKDKRSFCH.

The bHLH domain maps to 28-80 (RGKSPSAEEPLSLLDDMNHCYSRLRELVPGVPRGTQLSQVEILQRVIDYILDL).

Homodimer, and heterodimer with other HLH proteins. Interacts with COPS5 and COPS7A. Interacts with IFI204. Interacts with GATA4 and NKX2-5. Interacts with ANKRD2; both proteins cooperate in myoblast differentiation. Interacts with CLOCK and BMAL1. Phosphorylated in vitro by CDC2 and PKC.

The protein localises to the nucleus. Transcriptional regulator (lacking a basic DNA binding domain) which negatively regulates the basic helix-loop-helix (bHLH) transcription factors by forming heterodimers and inhibiting their DNA binding and transcriptional activity. Implicated in regulating a variety of cellular processes, including cellular growth, senescence, differentiation, apoptosis, angiogenesis, and neoplastic transformation. Involved in myogenesis by inhibiting skeletal muscle and cardiac myocyte differentiation and promoting muscle precursor cells proliferation. Inhibits the binding of E2A-containing protein complexes to muscle creatine kinase E-box enhancer. Regulates the circadian clock by repressing the transcriptional activator activity of the CLOCK-BMAL1 heterodimer. The sequence is that of DNA-binding protein inhibitor ID-3 (Id3) from Rattus norvegicus (Rat).